A 142-amino-acid polypeptide reads, in one-letter code: Large ribosomal subunit protein bL21 (142 aa).

The segment covering Arg74–Gly84 has biased composition (basic residues). The tract at residues Arg74–Glu142 is disordered. The segment covering Lys107–Lys125 has biased composition (basic and acidic residues). The segment covering Pro126 to Ala135 has biased composition (basic residues).

It belongs to the bacterial ribosomal protein bL21 family. Part of the 50S ribosomal subunit. Contacts protein L20.

Its function is as follows. This protein binds to 23S rRNA in the presence of protein L20. This chain is Large ribosomal subunit protein bL21, found in Brucella melitensis biotype 2 (strain ATCC 23457).